The following is a 310-amino-acid chain: Olfactory receptor 1496 (310 aa).

Residues Met1–His23 lie on the Extracellular side of the membrane. Asn3 carries an N-linked (GlcNAc...) asparagine glycan. A helical membrane pass occupies residues Leu24 to Gln48. At Leu49–Thr55 the chain is on the cytoplasmic side. The helical transmembrane segment at Pro56 to Pro77 threads the bilayer. The Extracellular segment spans residues Lys78–Gln98. Cys95 and Cys187 are oxidised to a cystine. Residues Thr99–Tyr118 form a helical membrane-spanning segment. Topologically, residues Asp119–Lys137 are cytoplasmic. Residues Leu138–Met156 form a helical membrane-spanning segment. Topologically, residues His157–Glu194 are extracellular. Residues Leu195–Ala217 traverse the membrane as a helical segment. Over Arg218–Lys234 the chain is Cytoplasmic. Residues Val235–Leu258 traverse the membrane as a helical segment. The Extracellular portion of the chain corresponds to Cys259 to Met270. Residues Val271–Leu290 form a helical membrane-spanning segment. Residues Arg291 to Leu310 are Cytoplasmic-facing.

This sequence belongs to the G-protein coupled receptor 1 family. As to expression, olfactory epithelium.

The protein localises to the cell membrane. In terms of biological role, odorant receptor. This chain is Olfactory receptor 1496 (Olr1496), found in Rattus norvegicus (Rat).